A 216-amino-acid polypeptide reads, in one-letter code: Adenylate kinase (216 aa).

Residue 10 to 15 participates in ATP binding; the sequence is GAGKGT. Residues 30 to 59 form an NMP region; it reads STGDMLRAAVKAETPVGLKAKAVMEAGQLV. AMP-binding positions include Thr-31, Arg-36, 57–59, 85–88, and Gln-92; these read QLV and GYPR. The segment at 126-164 is LID; sequence GRYTCATCGKGYHDKFEKPAVEGTCDKCGGHEFKRRPDD. Residue Arg-127 participates in ATP binding. Zn(2+) is bound by residues Cys-130, Cys-133, Cys-150, and Cys-153. AMP contacts are provided by Arg-161 and Arg-172. Ala-200 contributes to the ATP binding site.

It belongs to the adenylate kinase family. Monomer.

It is found in the cytoplasm. It carries out the reaction AMP + ATP = 2 ADP. The protein operates within purine metabolism; AMP biosynthesis via salvage pathway; AMP from ADP: step 1/1. In terms of biological role, catalyzes the reversible transfer of the terminal phosphate group between ATP and AMP. Plays an important role in cellular energy homeostasis and in adenine nucleotide metabolism. This Novosphingobium aromaticivorans (strain ATCC 700278 / DSM 12444 / CCUG 56034 / CIP 105152 / NBRC 16084 / F199) protein is Adenylate kinase.